Reading from the N-terminus, the 227-residue chain is Probable septum site-determining protein MinC (227 aa).

The protein belongs to the MinC family. As to quaternary structure, interacts with MinD and FtsZ.

Cell division inhibitor that blocks the formation of polar Z ring septums. Rapidly oscillates between the poles of the cell to destabilize FtsZ filaments that have formed before they mature into polar Z rings. Prevents FtsZ polymerization. In Geobacillus thermodenitrificans (strain NG80-2), this protein is Probable septum site-determining protein MinC.